Here is a 747-residue protein sequence, read N- to C-terminus: Cysteine--tRNA ligase, cytoplasmic (747 aa).

Residues 1 to 25 are disordered; sequence MTDSWERGKGRRTQPPWSAPNTQAQ. A compositionally biased stretch (polar residues) spans 15-25; that stretch reads PPWSAPNTQAQ. Cys54 lines the Zn(2+) pocket. Gly55 contributes to the L-cysteine binding site. The 'HIGH' region signature appears at 56–66; that stretch reads PTVYDASHMGH. Thr95 contacts L-cysteine. The short motif at 100–103 is the 'KIIK' region element; that stretch reads KIIK. Positions 347, 372, and 376 each coordinate Zn(2+). His372 serves as a coordination point for L-cysteine. The 'KMSKS' region signature appears at 405–409; the sequence is KMSKS. Lys408 contributes to the ATP binding site. A compositionally biased stretch (basic and acidic residues) spans 651 to 683; that stretch reads EEKRKAEEEKQRKKEEAARKKQQQEAAKLEKMK. The segment at 651–722 is disordered; it reads EEKRKAEEEK…KELSKGQSKK (72 aa).

This sequence belongs to the class-I aminoacyl-tRNA synthetase family. In terms of assembly, homodimer. It depends on Zn(2+) as a cofactor.

It is found in the cytoplasm. The catalysed reaction is tRNA(Cys) + L-cysteine + ATP = L-cysteinyl-tRNA(Cys) + AMP + diphosphate. Catalyzes the ATP-dependent ligation of cysteine to tRNA(Cys). This is Cysteine--tRNA ligase, cytoplasmic (cars1) from Xenopus tropicalis (Western clawed frog).